The chain runs to 137 residues: MKIALIAHDRKKQDMIQLTTAYKDILKKHELFATGTTGLKITEATGLPVVRFQSGPLGGDQQIGALIAKNDIDLVIFLRDPLTAQPHEPDVSALIRLSDVYAIPLATNMGTAEILIRSVEEGAFEFRNIVHGRDRDA.

In terms of domain architecture, MGS-like spans 1-137 (MKIALIAHDR…NIVHGRDRDA (137 aa)). Substrate contacts are provided by residues His8, Lys12, 34–37 (TGTT), and 54–55 (SG). The Proton donor/acceptor role is filled by Asp60. Residue His87 coordinates substrate.

Belongs to the methylglyoxal synthase family.

It catalyses the reaction dihydroxyacetone phosphate = methylglyoxal + phosphate. Functionally, catalyzes the formation of methylglyoxal from dihydroxyacetone phosphate. This Bacillus licheniformis (strain ATCC 14580 / DSM 13 / JCM 2505 / CCUG 7422 / NBRC 12200 / NCIMB 9375 / NCTC 10341 / NRRL NRS-1264 / Gibson 46) protein is Methylglyoxal synthase.